Reading from the N-terminus, the 610-residue chain is Elongation factor 4 (610 aa).

One can recognise a tr-type G domain in the interval 11–193 (EKIRNFSIIA…QIVEKVPAPT (183 aa)). Residues 23–28 (DHGKST) and 140–143 (NKID) each bind GTP.

The protein belongs to the TRAFAC class translation factor GTPase superfamily. Classic translation factor GTPase family. LepA subfamily.

The protein localises to the cell membrane. The enzyme catalyses GTP + H2O = GDP + phosphate + H(+). In terms of biological role, required for accurate and efficient protein synthesis under certain stress conditions. May act as a fidelity factor of the translation reaction, by catalyzing a one-codon backward translocation of tRNAs on improperly translocated ribosomes. Back-translocation proceeds from a post-translocation (POST) complex to a pre-translocation (PRE) complex, thus giving elongation factor G a second chance to translocate the tRNAs correctly. Binds to ribosomes in a GTP-dependent manner. The protein is Elongation factor 4 of Streptococcus pyogenes serotype M49 (strain NZ131).